Consider the following 437-residue polypeptide: Ribosomal protein uS12 methylthiotransferase RimO (437 aa).

Residues 4–114 form the MTTase N-terminal domain; that stretch reads PRIGFISLGC…VMNAVHEHLP (111 aa). [4Fe-4S] cluster contacts are provided by C13, C49, C78, C145, C149, and C152. The Radical SAM core domain occupies 131–368; it reads LTPRHYAYLK…MEVQERISAA (238 aa). A TRAM domain is found at 371 to 437; it reads RTRIGRTETV…AHDLWARLAD (67 aa).

The protein belongs to the methylthiotransferase family. RimO subfamily. [4Fe-4S] cluster serves as cofactor.

The protein resides in the cytoplasm. It catalyses the reaction L-aspartate(89)-[ribosomal protein uS12]-hydrogen + (sulfur carrier)-SH + AH2 + 2 S-adenosyl-L-methionine = 3-methylsulfanyl-L-aspartate(89)-[ribosomal protein uS12]-hydrogen + (sulfur carrier)-H + 5'-deoxyadenosine + L-methionine + A + S-adenosyl-L-homocysteine + 2 H(+). In terms of biological role, catalyzes the methylthiolation of an aspartic acid residue of ribosomal protein uS12. The chain is Ribosomal protein uS12 methylthiotransferase RimO from Methylococcus capsulatus (strain ATCC 33009 / NCIMB 11132 / Bath).